The following is a 359-amino-acid chain: 2-epi-5-epi-valiolone 7-kinase (359 aa).

The tract at residues 28-48 is disordered; that stretch reads GGLGEVHTTPSPGHARRPGAG.

It belongs to the ROK (NagC/XylR) family.

It catalyses the reaction 2-epi-5-epi-valiolone + ATP = 2-epi-5-epi-valiolone 7-phosphate + ADP + H(+). In terms of biological role, catalyzes the conversion of 2-epi-5-epi-valiolone to 2-epi-5-epi-valiolone 7-phosphate. Involved in the biosynthesis of the acarviose moiety of the alpha-glucosidase inhibitor acarbose. This is 2-epi-5-epi-valiolone 7-kinase from Actinoplanes sp. (strain ATCC 31044 / CBS 674.73 / SE50/110).